Reading from the N-terminus, the 931-residue chain is Isoleucine--tRNA ligase (931 aa).

The span at 1 to 14 shows a compositional bias: polar residues; it reads MDYSKTLNLPQTQF. Residues 1-25 are disordered; sequence MDYSKTLNLPQTQFPMRGNLPQREP. Positions 57–67 match the 'HIGH' region motif; it reads PYANGHIHLGH. Glu-559 lines the L-isoleucyl-5'-AMP pocket. The short motif at 600–604 is the 'KMSKS' region element; sequence KMSKS. Lys-603 contributes to the ATP binding site. Residues Cys-898, Cys-901, Cys-918, and Cys-921 each coordinate Zn(2+).

It belongs to the class-I aminoacyl-tRNA synthetase family. IleS type 1 subfamily. Monomer. It depends on Zn(2+) as a cofactor.

The protein localises to the cytoplasm. The catalysed reaction is tRNA(Ile) + L-isoleucine + ATP = L-isoleucyl-tRNA(Ile) + AMP + diphosphate. Catalyzes the attachment of isoleucine to tRNA(Ile). As IleRS can inadvertently accommodate and process structurally similar amino acids such as valine, to avoid such errors it has two additional distinct tRNA(Ile)-dependent editing activities. One activity is designated as 'pretransfer' editing and involves the hydrolysis of activated Val-AMP. The other activity is designated 'posttransfer' editing and involves deacylation of mischarged Val-tRNA(Ile). The polypeptide is Isoleucine--tRNA ligase (Desulforamulus reducens (strain ATCC BAA-1160 / DSM 100696 / MI-1) (Desulfotomaculum reducens)).